The following is a 381-amino-acid chain: Flap endonuclease 1 (381 aa).

The tract at residues 1-105 is N-domain; it reads MGIKGLNSII…HELDKRTSRR (105 aa). Asp34 contributes to the Mg(2+) binding site. DNA is bound by residues Arg47 and Arg71. Mg(2+)-binding residues include Asp87, Glu156, Glu158, Asp177, and Asp179. The segment at 120 to 251 is I-domain; it reads EKMKHERRLV…VTALKLMKEH (132 aa). Glu156 serves as a coordination point for DNA. Positions 229 and 231 each coordinate DNA. Asp231 is a Mg(2+) binding site. The tract at residues 338–346 is interaction with PCNA; sequence VQGRLDGFF.

The protein belongs to the XPG/RAD2 endonuclease family. FEN1 subfamily. In terms of assembly, interacts with PCNA. Three molecules of FEN1 bind to one PCNA trimer with each molecule binding to one PCNA monomer. PCNA stimulates the nuclease activity without altering cleavage specificity. It depends on Mg(2+) as a cofactor. In terms of processing, phosphorylated. Phosphorylation upon DNA damage induces relocalization to the nuclear plasma.

Its subcellular location is the nucleus. It is found in the nucleolus. The protein resides in the nucleoplasm. It localises to the mitochondrion. Structure-specific nuclease with 5'-flap endonuclease and 5'-3' exonuclease activities involved in DNA replication and repair. During DNA replication, cleaves the 5'-overhanging flap structure that is generated by displacement synthesis when DNA polymerase encounters the 5'-end of a downstream Okazaki fragment. It enters the flap from the 5'-end and then tracks to cleave the flap base, leaving a nick for ligation. Also involved in the long patch base excision repair (LP-BER) pathway, by cleaving within the apurinic/apyrimidinic (AP) site-terminated flap. Acts as a genome stabilization factor that prevents flaps from equilibrating into structures that lead to duplications and deletions. Also possesses 5'-3' exonuclease activity on nicked or gapped double-stranded DNA, and exhibits RNase H activity. Also involved in replication and repair of rDNA and in repairing mitochondrial DNA. This is Flap endonuclease 1 from Candida glabrata (strain ATCC 2001 / BCRC 20586 / JCM 3761 / NBRC 0622 / NRRL Y-65 / CBS 138) (Yeast).